The primary structure comprises 365 residues: Phosphatidylcholine:ceramide cholinephosphotransferase 4 (365 aa).

Topologically, residues M1–Q44 are cytoplasmic. Residues V45 to I65 form a helical membrane-spanning segment. At T66–G92 the chain is on the lumenal side. A helical transmembrane segment spans residues M93–F113. Over K114 to R165 the chain is Cytoplasmic. The helical transmembrane segment at F166 to L186 threads the bilayer. Residues P187 to T229 lie on the Lumenal side of the membrane. H228 is a catalytic residue. Residues V230–F250 form a helical membrane-spanning segment. A topological domain (cytoplasmic) is located at residue R251. Residues P252–Y272 form a helical membrane-spanning segment. Active-site residues include H271 and D275. Over T273–D275 the chain is Lumenal. Residues V276–G296 traverse the membrane as a helical segment. Over A297 to V365 the chain is Cytoplasmic.

This sequence belongs to the sphingomyelin synthase family.

It localises to the golgi apparatus membrane. It catalyses the reaction an N-acylsphing-4-enine + a 1,2-diacyl-sn-glycero-3-phosphocholine = a sphingomyelin + a 1,2-diacyl-sn-glycerol. Functionally, bidirectional lipid cholinephosphotransferase capable of converting phosphatidylcholine (PC) and ceramide to sphingomyelin (SM) and diacylglycerol (DAG) and vice versa. Direction is dependent on the relative concentrations of DAG and ceramide as phosphocholine acceptors. Directly and specifically recognizes the choline head group on the substrate. Also requires two fatty chains on the choline-P donor molecule in order to be recognized efficiently as a substrate. Does not function strictly as a SM synthase. Essential for viability of the pathogenic bloodstream stage of this human protozoan parasite and, consequently, can be considered as potential drug target. This Trypanosoma brucei brucei (strain 927/4 GUTat10.1) protein is Phosphatidylcholine:ceramide cholinephosphotransferase 4.